A 1277-amino-acid chain; its full sequence is Membrane-associated guanylate kinase, WW and PDZ domain-containing protein 2 (1277 aa).

The region spanning 17–101 (ESVIGRNPEG…PLRLKCVKQG (85 aa)) is the PDZ domain. In terms of domain architecture, Guanylate kinase-like spans 109–283 (RHYLNLRFQK…APVYSQPEEL (175 aa)). Positions 205-308 (PGATPSAEGK…EDSDPLPDNW (104 aa)) are disordered. Residues 281-296 (EELKDQMDDTKSTKPE) show a composition bias toward basic and acidic residues. 2 WW domains span residues 302–335 (DPLPDNWEMAYTEKGEVYFIDHNTKTTSWLDPRL) and 348–381 (NELPYGWEKIDDPIYGTYYVDHINRRTQFENPVL). The segment at 302 to 381 (DPLPDNWEMA…RRTQFENPVL (80 aa)) is interaction with DDN. At tyrosine 362 the chain carries Phosphotyrosine. The region spanning 426–510 (STTLKKSNMG…SVNLVLCRGY (85 aa)) is the PDZ 1 domain. Positions 556 to 575 (QSVPDITDRPPHSLHSMPAD) are disordered. Positions 605–683 (TLTIVKGAKG…ETSLIIHRGG (79 aa)) constitute a PDZ 2 domain. Serine 686 bears the Phosphoserine mark. Positions 778–860 (DVHLRRMESG…NGQVNLTVRR (83 aa)) constitute a PDZ 3 domain. Tyrosine 827 is subject to Phosphotyrosine. The segment at 869–913 (CPENGRSPGSVSTHHSSPRSDYATYANSNHAAPSNNASPPEGFAS) is disordered. 2 positions are modified to phosphoserine: serine 884 and serine 885. Over residues 894–908 (ANSNHAAPSNNASPP) the composition is skewed to low complexity. The PDZ 4 domain occupies 920-1010 (DVIIHRKENE…SVTLRIIPQE (91 aa)). The span at 1011 to 1042 (ELNNPTSAPSSEKQSPMAQQHSPLAQQHSPLA) shows a compositional bias: polar residues. Residues 1011-1130 (ELNNPTSAPS…PDTRQYPLSD (120 aa)) are disordered. The span at 1069 to 1085 (NSYRSEVKARQDVKPDI) shows a compositional bias: basic and acidic residues. In terms of domain architecture, PDZ 5 spans 1141 to 1223 (TVDMEKGAKG…RVRLLLKRGT (83 aa)).

The protein belongs to the MAGUK family. As to quaternary structure, interacts (via its WW domains) with DRPLA. Interacts with CTNNB1, ACVR2A, SMAD2 and SMAD3. Part of a complex consisting of MAGI2/ARIP1, ACVR2A, ACVR1B and SMAD3. May interact with HTR2A and IGSF9. Interacts with HTR4. Interacts (via guanylate kinase domain) with DLGAP1. Interacts (via PDZ domains) with GRIN2A, GRID2 and NLGN1. Interacts with CTNND2. Interacts with MAGUIN-1. Interacts (via its second PDZ domain) with PTEN (via unphosphorylated C-terminus); this interaction diminishes the degradation rate of PTEN. Found in a complex, at least composed of KIDINS220, MAGI2, NTRK1 and RAPGEF2; the complex is mainly formed at late endosomes in a NGF-dependent manner. Interacts with RAPGEF2; the interaction occurs before or after nerve growth factor (NGF) stimulation. Isoform 1 interacts (via PDZ domain) with KIDINS220 isoform 2 (via C-terminal domain). Interacts with DDN. Identified in a complex with ACTN4, CASK, IQGAP1, NPHS1, SPTAN1 and SPTBN1. Interacts with DLL1. Found in a complex with IGSF9B and NLGN2; the interaction with IGSF9B is mediated via the PDZ 5 and PDZ 6 domains, while the interaction with NLGN2 is mediated via the WW1, WW2 and PDZ2 domains. Interacts (via PDZ 6 domain) with USH1G (via SAM domain); the interaction is triggered by phosphorylation of USH1G by CK2 and negatively regulates MAGI2-mediated endocytosis. Expressed in the foot process layer of podocytes of the kidney glomeruli but not in tubules (at protein level). Expressed in the brain.

The protein resides in the cytoplasm. It is found in the late endosome. It localises to the synapse. Its subcellular location is the synaptosome. The protein localises to the cell membrane. The protein resides in the cytoskeleton. It is found in the microtubule organizing center. It localises to the centrosome. Its subcellular location is the cell projection. The protein localises to the cilium. The protein resides in the centriole. It is found in the photoreceptor inner segment. It localises to the photoreceptor outer segment. Seems to act as scaffold molecule at synaptic junctions by assembling neurotransmitter receptors and cell adhesion proteins. Plays a role in nerve growth factor (NGF)-induced recruitment of RAPGEF2 to late endosomes and neurite outgrowth. May play a role in regulating activin-mediated signaling in neuronal cells. Enhances the ability of PTEN to suppress AKT1 activation. Plays a role in receptor-mediated clathrin-dependent endocytosis which is required for ciliogenesis. This chain is Membrane-associated guanylate kinase, WW and PDZ domain-containing protein 2 (Magi2), found in Rattus norvegicus (Rat).